The sequence spans 146 residues: Deoxyuridine 5'-triphosphate nucleotidohydrolase (146 aa).

Substrate-binding positions include 66 to 68, N79, 83 to 85, and K93; these read RSG and TID.

Belongs to the dUTPase family. The cofactor is Mg(2+).

It catalyses the reaction dUTP + H2O = dUMP + diphosphate + H(+). Its pathway is pyrimidine metabolism; dUMP biosynthesis; dUMP from dCTP (dUTP route): step 2/2. Functionally, this enzyme is involved in nucleotide metabolism: it produces dUMP, the immediate precursor of thymidine nucleotides and it decreases the intracellular concentration of dUTP so that uracil cannot be incorporated into DNA. The protein is Deoxyuridine 5'-triphosphate nucleotidohydrolase of Zymomonas mobilis subsp. mobilis (strain ATCC 31821 / ZM4 / CP4).